The chain runs to 218 residues: Outer-membrane lipoprotein LolB (218 aa).

An N-terminal signal peptide occupies residues 1-20 (MSQVIRTLALTGLALAGLSG). A lipid anchor (N-palmitoyl cysteine) is attached at C21. A lipid anchor (S-diacylglycerol cysteine) is attached at C21.

This sequence belongs to the LolB family. As to quaternary structure, monomer.

Its subcellular location is the cell outer membrane. Its function is as follows. Plays a critical role in the incorporation of lipoproteins in the outer membrane after they are released by the LolA protein. The polypeptide is Outer-membrane lipoprotein LolB (Xanthomonas campestris pv. campestris (strain 8004)).